A 248-amino-acid chain; its full sequence is Proteasome subunit alpha (248 aa).

Belongs to the peptidase T1A family. The 20S proteasome core is composed of 14 alpha and 14 beta subunits that assemble into four stacked heptameric rings, resulting in a barrel-shaped structure. The two inner rings, each composed of seven catalytic beta subunits, are sandwiched by two outer rings, each composed of seven alpha subunits. The catalytic chamber with the active sites is on the inside of the barrel. Has a gated structure, the ends of the cylinder being occluded by the N-termini of the alpha-subunits. Is capped by the proteasome-associated ATPase, ARC.

It is found in the cytoplasm. Its pathway is protein degradation; proteasomal Pup-dependent pathway. The formation of the proteasomal ATPase ARC-20S proteasome complex, likely via the docking of the C-termini of ARC into the intersubunit pockets in the alpha-rings, may trigger opening of the gate for substrate entry. Interconversion between the open-gate and close-gate conformations leads to a dynamic regulation of the 20S proteasome proteolysis activity. Its function is as follows. Component of the proteasome core, a large protease complex with broad specificity involved in protein degradation. The protein is Proteasome subunit alpha of Mycobacterium bovis (strain BCG / Pasteur 1173P2).